The following is an 83-amino-acid chain: Apolipoprotein C-I, basic form (83 aa).

A signal peptide spans 1 to 26 (MRLFLSLPVLVVVLSIVLEGPAPAQG).

This sequence belongs to the apolipoprotein C1 family.

The protein localises to the secreted. Inhibitor of lipoprotein binding to the low density lipoprotein (LDL) receptor, LDL receptor-related protein, and very low density lipoprotein (VLDL) receptor. Associates with high density lipoproteins (HDL) and the triacylglycerol-rich lipoproteins in the plasma and makes up about 10% of the protein of the VLDL and 2% of that of HDL. Appears to interfere directly with fatty acid uptake and is also the major plasma inhibitor of cholesteryl ester transfer protein (CETP). Binds free fatty acids and reduces their intracellular esterification. Modulates the interaction of APOE with beta-migrating VLDL and inhibits binding of beta-VLDL to the LDL receptor-related protein. This Pan troglodytes (Chimpanzee) protein is Apolipoprotein C-I, basic form (APOC1B).